Here is a 154-residue protein sequence, read N- to C-terminus: Myoglobin (154 aa).

A Globin domain is found at 2 to 148; the sequence is GLSDGEWQLV…FRNDIAAKYK (147 aa). The residue at position 4 (Ser-4) is a Phosphoserine. His-65 is a binding site for nitrite. Position 65 (His-65) interacts with O2. Thr-68 bears the Phosphothreonine mark. His-94 contributes to the heme b binding site.

This sequence belongs to the globin family. As to quaternary structure, monomeric.

It is found in the cytoplasm. Its subcellular location is the sarcoplasm. The enzyme catalyses Fe(III)-heme b-[protein] + nitric oxide + H2O = Fe(II)-heme b-[protein] + nitrite + 2 H(+). It carries out the reaction H2O2 + AH2 = A + 2 H2O. In terms of biological role, monomeric heme protein which primary function is to store oxygen and facilitate its diffusion within muscle tissues. Reversibly binds oxygen through a pentacoordinated heme iron and enables its timely and efficient release as needed during periods of heightened demand. Depending on the oxidative conditions of tissues and cells, and in addition to its ability to bind oxygen, it also has a nitrite reductase activity whereby it regulates the production of bioactive nitric oxide. Under stress conditions, like hypoxia and anoxia, it also protects cells against reactive oxygen species thanks to its pseudoperoxidase activity. The polypeptide is Myoglobin (MB) (Tupaia glis (Common tree shrew)).